Reading from the N-terminus, the 229-residue chain is PKHD-type hydroxylase BBta_3541 (229 aa).

The Fe2OG dioxygenase domain occupies 78-180 (QIFPPLFNRY…RVASFFWMQS (103 aa)). Fe cation-binding residues include histidine 98, aspartate 100, and histidine 161. Arginine 171 is a binding site for 2-oxoglutarate.

It depends on Fe(2+) as a cofactor. L-ascorbate is required as a cofactor.

This chain is PKHD-type hydroxylase BBta_3541, found in Bradyrhizobium sp. (strain BTAi1 / ATCC BAA-1182).